The following is a 249-amino-acid chain: DNA repair protein RecO (249 aa).

Belongs to the RecO family.

In terms of biological role, involved in DNA repair and RecF pathway recombination. In Mycoplasma mycoides subsp. mycoides SC (strain CCUG 32753 / NCTC 10114 / PG1), this protein is DNA repair protein RecO.